A 357-amino-acid polypeptide reads, in one-letter code: Protein XRP2 (357 aa).

The span at 1–11 shows a compositional bias: basic residues; it reads MGCFFSKRRKP. Residues 1 to 39 form a disordered region; that stretch reads MGCFFSKRRKPAQGGQQQGASQEPAAGEEKAPQYSWDQR. A lipid anchor (N-myristoyl glycine) is attached at glycine 2. Cysteine 3 carries S-palmitoyl cysteine lipidation. The span at 12-25 shows a compositional bias: low complexity; it reads AQGGQQQGASQEPA. The C-CAP/cofactor C-like domain maps to 32 to 186; sequence PQYSWDQRAK…TWSNIHDFTP (155 aa). GTP-binding positions include 105-106 and 122-125; these read GS and QQFR.

The protein belongs to the TBCC family. Post-translationally, myristoylated on Gly-2; which may be required for membrane targeting. In terms of processing, palmitoylated on Cys-3; which may be required for plasma membrane targeting.

Its subcellular location is the cell membrane. Functionally, acts as a GTPase-activating protein (GAP) for tubulin in concert with tubulin-specific chaperone C, but does not enhance tubulin heterodimerization. Acts as a GTPase-activating protein. May act as guanine nucleotide dissociation inhibitor towards ADP-ribosylation factor-like proteins. This is Protein XRP2 (RP2) from Gallus gallus (Chicken).